The sequence spans 468 residues: ATP synthase subunit beta (468 aa).

155–162 (GGAGVGKT) provides a ligand contact to ATP.

It belongs to the ATPase alpha/beta chains family. As to quaternary structure, F-type ATPases have 2 components, CF(1) - the catalytic core - and CF(0) - the membrane proton channel. CF(1) has five subunits: alpha(3), beta(3), gamma(1), delta(1), epsilon(1). CF(0) has three main subunits: a(1), b(2) and c(9-12). The alpha and beta chains form an alternating ring which encloses part of the gamma chain. CF(1) is attached to CF(0) by a central stalk formed by the gamma and epsilon chains, while a peripheral stalk is formed by the delta and b chains.

The protein resides in the cell membrane. It catalyses the reaction ATP + H2O + 4 H(+)(in) = ADP + phosphate + 5 H(+)(out). Functionally, produces ATP from ADP in the presence of a proton gradient across the membrane. The catalytic sites are hosted primarily by the beta subunits. The sequence is that of ATP synthase subunit beta from Streptococcus uberis (strain ATCC BAA-854 / 0140J).